A 163-amino-acid chain; its full sequence is MTKVLLGFMGVGKTTVSKHLSMHCKDMDAIIEAKIGMSIAAFFEQHGEIAFRTIESQVLKDLLFANDNSVIVTGGGVVVLQENRQLLRKNHQHNILLVASFETLYQRLKHDKKSQRPLFLKYSKEAFYEFYQQRMVFYEGLSDLVIRVDHRTPEEVANIIEGY.

10–15 (GVGKTT) contributes to the ATP binding site. Thr14 is a Mg(2+) binding site. Substrate is bound by residues Asp28, Arg52, and Gly75. Arg116 serves as a coordination point for ATP. Residue Arg134 coordinates substrate. Arg151 lines the ATP pocket.

This sequence belongs to the shikimate kinase family. In terms of assembly, monomer. Requires Mg(2+) as cofactor.

Its subcellular location is the cytoplasm. The catalysed reaction is shikimate + ATP = 3-phosphoshikimate + ADP + H(+). The protein operates within metabolic intermediate biosynthesis; chorismate biosynthesis; chorismate from D-erythrose 4-phosphate and phosphoenolpyruvate: step 5/7. In terms of biological role, catalyzes the specific phosphorylation of the 3-hydroxyl group of shikimic acid using ATP as a cosubstrate. The protein is Shikimate kinase of Streptococcus pyogenes serotype M12 (strain MGAS2096).